The chain runs to 726 residues: Delta-1-pyrroline-5-carboxylate synthase B (726 aa).

Positions 1–296 (MTEIDRSRAF…WAPVVDTTSR (296 aa)) are glutamate 5-kinase. Residues Ser-60, Asp-157, and Asn-176 each coordinate substrate. ATP is bound by residues 196–197 (SD) and 236–242 (RGGMTAK). The tract at residues 297–717 (DMAVAARESS…YTHKDLPVLQ (421 aa)) is gamma-glutamyl phosphate reductase.

In the N-terminal section; belongs to the glutamate 5-kinase family. It in the C-terminal section; belongs to the gamma-glutamyl phosphate reductase family.

The catalysed reaction is L-glutamate + ATP = L-glutamyl 5-phosphate + ADP. The enzyme catalyses L-glutamate 5-semialdehyde + phosphate + NADP(+) = L-glutamyl 5-phosphate + NADPH + H(+). Its pathway is amino-acid biosynthesis; L-proline biosynthesis; L-glutamate 5-semialdehyde from L-glutamate: step 1/2. The protein operates within amino-acid biosynthesis; L-proline biosynthesis; L-glutamate 5-semialdehyde from L-glutamate: step 2/2. Functionally, P5CS plays a key role in proline biosynthesis, leading to osmoregulation in plants. The chain is Delta-1-pyrroline-5-carboxylate synthase B (P5CSB) from Arabidopsis thaliana (Mouse-ear cress).